A 410-amino-acid polypeptide reads, in one-letter code: S-adenosylmethionine synthase (410 aa).

H21 contacts ATP. D23 contributes to the Mg(2+) binding site. E49 is a binding site for K(+). L-methionine contacts are provided by E62 and Q105. The interval 105–115 (QSQEIGAGVDQ) is flexible loop. The segment at 107–133 (QEIGAGVDQSHEVRSGENTDADDQAGA) is disordered. ATP is bound by residues 180–182 (DGK), D261, 267–268 (RK), A284, and K288. D261 lines the L-methionine pocket. K292 is an L-methionine binding site.

This sequence belongs to the AdoMet synthase family. As to quaternary structure, homotetramer; dimer of dimers. Mg(2+) serves as cofactor. The cofactor is K(+).

It localises to the cytoplasm. It carries out the reaction L-methionine + ATP + H2O = S-adenosyl-L-methionine + phosphate + diphosphate. It participates in amino-acid biosynthesis; S-adenosyl-L-methionine biosynthesis; S-adenosyl-L-methionine from L-methionine: step 1/1. Functionally, catalyzes the formation of S-adenosylmethionine (AdoMet) from methionine and ATP. The overall synthetic reaction is composed of two sequential steps, AdoMet formation and the subsequent tripolyphosphate hydrolysis which occurs prior to release of AdoMet from the enzyme. This Corynebacterium diphtheriae (strain ATCC 700971 / NCTC 13129 / Biotype gravis) protein is S-adenosylmethionine synthase.